The primary structure comprises 328 residues: Phenylalanine--tRNA ligase alpha subunit (328 aa).

Glu-253 serves as a coordination point for Mg(2+).

The protein belongs to the class-II aminoacyl-tRNA synthetase family. Phe-tRNA synthetase alpha subunit type 1 subfamily. As to quaternary structure, tetramer of two alpha and two beta subunits. Mg(2+) is required as a cofactor.

The protein resides in the cytoplasm. It carries out the reaction tRNA(Phe) + L-phenylalanine + ATP = L-phenylalanyl-tRNA(Phe) + AMP + diphosphate + H(+). In Actinobacillus pleuropneumoniae serotype 7 (strain AP76), this protein is Phenylalanine--tRNA ligase alpha subunit.